The primary structure comprises 134 residues: Cytochrome c-550 (134 aa).

At Q1 the chain carries Pyrrolidone carboxylic acid. The heme c site is built by C15, C18, H19, and M100.

Binds 1 heme c group covalently per subunit.

Its function is as follows. Electron donor for nitrous-oxide reductase. The chain is Cytochrome c-550 from Paracoccus pantotrophus (Thiosphaera pantotropha).